An 819-amino-acid chain; its full sequence is Zinc finger protein 658B (819 aa).

The C2H2-type 1; degenerate zinc-finger motif lies at 141 to 166; it reads YLSDEHGKCRKSFYWKAHLIQHERPH. C2H2-type zinc fingers lie at residues 200-222, 278-300, 306-328, 334-356, 362-384, 390-412, 418-440, 446-468, 474-496, 502-524, 530-552, 558-580, 586-608, and 614-636; these read YECN…LRIH, YECI…QRIH, YECV…QRVH, YECN…QRIH, YECS…HRIH, YECS…QRIH, YKCN…QNIH, YECS…RRIH, YECS…ERIH, and YECN…HRIH. Residues 642 to 664 form a C2H2-type 16; degenerate zinc finger; that stretch reads YECNDCGKTFSKTSHLRAHLRTR. C2H2-type zinc fingers lie at residues 670–692, 698–720, 726–748, 754–776, and 782–805; these read YECS…QRVH, YECN…QRIH, and YECD…TRMH.

It belongs to the krueppel C2H2-type zinc-finger protein family.

The protein resides in the nucleus. In terms of biological role, may be involved in transcriptional regulation. In Homo sapiens (Human), this protein is Zinc finger protein 658B (ZNF658B).